The following is a 740-amino-acid chain: MAFFSPWKLSSQKLGFFLVTFGFIWGMMLLHFTIQQRTQPESSSMLREQILDLSKRYIKALAEENRNVVDGPYAGVMTAYDLKKTLAVLLDNILQRIGKLESKVDNLVNGTGANSTNSTTAVPSLVSLEKINVADIINGVQEKCVLPPMDGYPHCEGKIKWMKDMWRSDPCYADYGVDGTSCSFFIYLSEVENWCPRLPWRAKNPYEEADHNSLAEIRTDFNILYGMMKKHEEFRWMRLRIRRMADAWIQAIKSLAEKQNLEKRKRKKILVHLGLLTKESGFKIAETAFSGGPLGELVQWSDLITSLYLLGHDIRISASLAELKEIMKKVVGNRSGCPTVGDRIVELIYIDIVGLAQFKKTLGPSWVHYQCMLRVLDSFGTEPEFNHASYAQSKGHKTPWGKWNLNPQQFYTMFPHTPDNSFLGFVVEQHLNSSDIHHINEIKRQNQSLVYGKVDSFWKNKKIYLDIIHTYMEVHATVYGSSTKNIPSYVKNHGILSGRDLQFLLRETKLFVGLGFPYEGPAPLEAIANGCAFLNPKFNPPKSSKNTDFFIGKPTLRELTSQHPYAEVFIGRPHVWTVDLNNREEVEDAVKAILNQKIEPYMPYEFTCEGMLQRINAFIEKQDFCHGQVMWPPLSALQVKLAEPGQSCKQVCQESQLICEPSFFQHLNKEKDLLKYKVICQSSELYKDILVPSFYPKSKHCVFQGDLLLFSCAGAHPTHQRICPCRDFIKGQVALCKDCL.

Over Met-1–Lys-13 the chain is Cytoplasmic. The chain crosses the membrane as a helical; Signal-anchor for type II membrane protein span at residues Leu-14–Leu-30. Residues His-31–Leu-740 are Lumenal-facing. N-linked (GlcNAc...) asparagine glycosylation is found at Asn-109, Asn-114, and Asn-117. 9 disulfides stabilise this stretch: Cys-144/Cys-182, Cys-155/Cys-195, Cys-171/Cys-337, Cys-371/Cys-625, Cys-648/Cys-723, Cys-652/Cys-725, Cys-659/Cys-712, Cys-680/Cys-701, and Cys-736/Cys-739. The segment at Asn-212–Leu-740 is sufficient for catalytic activity. Residue Asn-333 is glycosylated (N-linked (GlcNAc...) asparagine). Asp-377–Ser-378 contacts substrate. 2 N-linked (GlcNAc...) asparagine glycosylation sites follow: Asn-432 and Asn-446. Glu-525 contributes to the UDP-N-acetyl-alpha-D-glucosamine binding site. Lys-553 provides a ligand contact to substrate.

It belongs to the glycosyltransferase 18 family. In terms of processing, N-glycosylated. A secreted form is released from the membrane after cleavage by gamma-secretase. As to expression, detected in kidney (at protein level). Detected in kidney.

The protein localises to the golgi apparatus membrane. The protein resides in the secreted. It catalyses the reaction N(4)-{beta-D-GlcNAc-(1-&gt;2)-[beta-D-GlcNAc-(1-&gt;4)]-alpha-D-Man-(1-&gt;3)-[beta-D-GlcNAc-(1-&gt;2)-alpha-D-Man-(1-&gt;6)]-beta-D-Man-(1-&gt;4)-beta-D-GlcNAc-(1-&gt;4)-beta-D-GlcNAc}-L-asparaginyl-[protein] + UDP-N-acetyl-alpha-D-glucosamine = N(4)-{beta-D-GlcNAc-(1-&gt;2)-[beta-D-GlcNAc-(1-&gt;4)]-alpha-D-Man-(1-&gt;3)-[beta-D-GlcNAc-(1-&gt;2)-[beta-D-GlcNAc-(1-&gt;6)]-alpha-D-Man-(1-&gt;6)]-beta-D-Man-(1-&gt;4)-beta-D-GlcNAc-(1-&gt;4)-beta-D-GlcNAc}-L-asparaginyl-[protein] + UDP + H(+). Its pathway is protein modification; protein glycosylation. Catalyzes the addition of N-acetylglucosamine (GlcNAc) in beta 1-6 linkage to the alpha-linked mannose of biantennary N-linked oligosaccharides. Catalyzes an important step in the biosynthesis of branched, complex-type N-glycans, such as those found on EGFR, TGFR (TGF-beta receptor) and CDH2. Via its role in the biosynthesis of complex N-glycans, plays an important role in the activation of cellular signaling pathways, reorganization of the actin cytoskeleton, cell-cell adhesion and cell migration. MGAT5-dependent EGFR N-glycosylation enhances the interaction between EGFR and LGALS3 and thereby prevents rapid EGFR endocytosis and prolongs EGFR signaling. Required for efficient interaction between TGFB1 and its receptor. Enhances activation of intracellular signaling pathways by several types of growth factors, including FGF2, PDGF, IGF, TGFB1 and EGF. MGAT5-dependent CDH2 N-glycosylation inhibits CDH2-mediated homotypic cell-cell adhesion and contributes to the regulation of downstream signaling pathways. Promotes cell migration. Contributes to the regulation of the inflammatory response. MGAT5-dependent TCR N-glycosylation enhances the interaction between TCR and LGALS3, limits agonist-induced TCR clustering, and thereby dampens TCR-mediated responses to antigens. Required for normal leukocyte evasation and accumulation at sites of inflammation. Inhibits attachment of monocytes to the vascular endothelium and subsequent monocyte diapedesis. Its function is as follows. Promotes proliferation of umbilical vein endothelial cells and angiogenesis, at least in part by promoting the release of the growth factor FGF2 from the extracellular matrix. This chain is Alpha-1,6-mannosylglycoprotein 6-beta-N-acetylglucosaminyltransferase A (Mgat5), found in Rattus norvegicus (Rat).